The chain runs to 88 residues: Cell division topological specificity factor (88 aa).

The protein belongs to the MinE family.

Prevents the cell division inhibition by proteins MinC and MinD at internal division sites while permitting inhibition at polar sites. This ensures cell division at the proper site by restricting the formation of a division septum at the midpoint of the long axis of the cell. The chain is Cell division topological specificity factor from Carboxydothermus hydrogenoformans (strain ATCC BAA-161 / DSM 6008 / Z-2901).